Here is a 561-residue protein sequence, read N- to C-terminus: Urocanate hydratase (561 aa).

NAD(+)-binding positions include Gly52–Gly53, Gln130, Gly176–Gly178, Glu196, Arg201, Asn242–Ala243, Gln263–His267, Tyr273–Leu274, and Tyr322. Residue Cys410 is part of the active site. Gly492 is a binding site for NAD(+).

Belongs to the urocanase family. Requires NAD(+) as cofactor.

It localises to the cytoplasm. It carries out the reaction 4-imidazolone-5-propanoate = trans-urocanate + H2O. It participates in amino-acid degradation; L-histidine degradation into L-glutamate; N-formimidoyl-L-glutamate from L-histidine: step 2/3. Catalyzes the conversion of urocanate to 4-imidazolone-5-propionate. The sequence is that of Urocanate hydratase from Salmonella newport (strain SL254).